A 415-amino-acid chain; its full sequence is uncharacterized protein (415 aa).

C85, C91, C94, and C175 together coordinate [4Fe-4S] cluster. S-adenosyl-L-methionine contacts are provided by Q248, Y276, E297, and N344. The Nucleophile role is filled by C371.

Belongs to the class I-like SAM-binding methyltransferase superfamily. RNA M5U methyltransferase family.

This is an uncharacterized protein from Leptospira interrogans serogroup Icterohaemorrhagiae serovar Lai (strain 56601).